The sequence spans 225 residues: UPF0758 protein Shal_0429 (225 aa).

The 123-residue stretch at 102 to 224 (ILSDPDLTRD…IVSFAERGWI (123 aa)) folds into the MPN domain. Zn(2+)-binding residues include histidine 173, histidine 175, and aspartate 186. Positions 173-186 (HNHPSGIAEPSTAD) match the JAMM motif motif.

Belongs to the UPF0758 family.

The polypeptide is UPF0758 protein Shal_0429 (Shewanella halifaxensis (strain HAW-EB4)).